The following is a 257-amino-acid chain: Phosphate import ATP-binding protein PstB (257 aa).

The region spanning 11–252 is the ABC transporter domain; it reads IQVRDLNFYY…PAKKQTEDYI (242 aa). 43-50 is a binding site for ATP; sequence GPSGSGKS.

This sequence belongs to the ABC transporter superfamily. Phosphate importer (TC 3.A.1.7) family. As to quaternary structure, the complex is composed of two ATP-binding proteins (PstB), two transmembrane proteins (PstC and PstA) and a solute-binding protein (PstS).

It is found in the cell inner membrane. The catalysed reaction is phosphate(out) + ATP + H2O = ADP + 2 phosphate(in) + H(+). Its function is as follows. Part of the ABC transporter complex PstSACB involved in phosphate import. Responsible for energy coupling to the transport system. This is Phosphate import ATP-binding protein PstB from Salmonella choleraesuis (strain SC-B67).